Reading from the N-terminus, the 599-residue chain is Nucleolar protein dnt1 (599 aa).

S174 bears the Phosphoserine mark. Disordered regions lie at residues 210 to 262 (TQEE…PSRL) and 292 to 599 (DKSL…AALV). The span at 218–241 (QSFNSSLTPSQPTTYNRANFFSIN) shows a compositional bias: polar residues. Over residues 242–251 (DASSDSSSDA) the composition is skewed to low complexity. The span at 292–303 (DKSLRSSTREVS) shows a compositional bias: basic and acidic residues. The residue at position 306 (S306) is a Phosphoserine. Acidic residues predominate over residues 307 to 320 (PNEDSVNDDSSSDV). Residues 321 to 333 (SDEKETEAKHEIR) are compositionally biased toward basic and acidic residues. The span at 344 to 354 (SHPSTAVPSEN) shows a compositional bias: polar residues. Over residues 364–380 (LSESSTTSISSSPSENS) the composition is skewed to low complexity. Residues 390–401 (DSPNKSLVNDNV) are compositionally biased toward polar residues. Over residues 402-413 (SAKHDKESENGK) the composition is skewed to basic and acidic residues. The segment covering 421–431 (QTLVTTSTISA) has biased composition (polar residues). The span at 436 to 452 (PSDEIGSENDSDSDSDS) shows a compositional bias: acidic residues. Over residues 456 to 480 (VPLSQLQKKSQQRNSVSHEIQNRGT) the composition is skewed to polar residues. Residues 483 to 500 (SPKEPKAKPSTERPETHR) show a composition bias toward basic and acidic residues. A compositionally biased stretch (polar residues) spans 501-514 (TLSYSRLSELSKTF). The residue at position 513 (T513) is a Phosphothreonine. 2 stretches are compositionally biased toward basic and acidic residues: residues 533 to 542 (ESKEEGRSDE) and 558 to 574 (NSEKEDRSNPIPVEKRA).

Phosphorylated by clp1.

Its subcellular location is the cytoplasm. It localises to the nucleus. The protein resides in the nucleolus. The protein localises to the cytoskeleton. It is found in the spindle. Negatively regulates the septation initiation network (SIN) pathway, independently of the cdc14 phosphatase clp1. May also have a role in silencing rDNA transcription. Required for maintaining the exclusive nucleolus localization of nuc1. The polypeptide is Nucleolar protein dnt1 (dnt1) (Schizosaccharomyces pombe (strain 972 / ATCC 24843) (Fission yeast)).